A 67-amino-acid chain; its full sequence is Large ribosomal subunit protein bL35 (67 aa).

Belongs to the bacterial ribosomal protein bL35 family.

In Leptothrix cholodnii (strain ATCC 51168 / LMG 8142 / SP-6) (Leptothrix discophora (strain SP-6)), this protein is Large ribosomal subunit protein bL35.